Reading from the N-terminus, the 332-residue chain is Glycerol-3-phosphate dehydrogenase [NAD(P)+] (332 aa).

NADPH-binding residues include tryptophan 11, arginine 30, and lysine 108. 3 residues coordinate sn-glycerol 3-phosphate: lysine 108, glycine 137, and serine 139. Alanine 141 serves as a coordination point for NADPH. Lysine 192, aspartate 245, serine 255, arginine 256, and asparagine 257 together coordinate sn-glycerol 3-phosphate. The active-site Proton acceptor is the lysine 192. NADPH is bound at residue arginine 256. The NADPH site is built by valine 280 and glutamate 282.

This sequence belongs to the NAD-dependent glycerol-3-phosphate dehydrogenase family.

Its subcellular location is the cytoplasm. The enzyme catalyses sn-glycerol 3-phosphate + NAD(+) = dihydroxyacetone phosphate + NADH + H(+). The catalysed reaction is sn-glycerol 3-phosphate + NADP(+) = dihydroxyacetone phosphate + NADPH + H(+). It functions in the pathway membrane lipid metabolism; glycerophospholipid metabolism. Catalyzes the reduction of the glycolytic intermediate dihydroxyacetone phosphate (DHAP) to sn-glycerol 3-phosphate (G3P), the key precursor for phospholipid synthesis. The chain is Glycerol-3-phosphate dehydrogenase [NAD(P)+] from Burkholderia cenocepacia (strain ATCC BAA-245 / DSM 16553 / LMG 16656 / NCTC 13227 / J2315 / CF5610) (Burkholderia cepacia (strain J2315)).